Reading from the N-terminus, the 490-residue chain is Dual specificity protein kinase CLK3 (490 aa).

Tyr7 is modified (phosphotyrosine). 6 positions are modified to phosphoserine: Ser9, Ser49, Ser51, Ser67, Ser76, and Ser78. Residues Arg22–Asp138 form a disordered region. Basic and acidic residues-rich tracts occupy residues Tyr26 to Pro56 and Glu63 to Ser76. Residues Thr103 to Arg116 show a composition bias toward basic residues. The span at Ser117 to Lys130 shows a compositional bias: low complexity. Ser135 carries the post-translational modification Phosphoserine. Residues Tyr156–Phe472 form the Protein kinase domain. Residues Leu162–Val170 and Lys186 each bind ATP. Catalysis depends on Asp283, which acts as the Proton acceptor.

It belongs to the protein kinase superfamily. CMGC Ser/Thr protein kinase family. Lammer subfamily. In terms of processing, autophosphorylates on all three types of residues.

The protein resides in the nucleus. The protein localises to the cytoplasm. Its subcellular location is the cytoplasmic vesicle. It is found in the secretory vesicle. It localises to the acrosome. The catalysed reaction is L-seryl-[protein] + ATP = O-phospho-L-seryl-[protein] + ADP + H(+). The enzyme catalyses L-threonyl-[protein] + ATP = O-phospho-L-threonyl-[protein] + ADP + H(+). It catalyses the reaction L-tyrosyl-[protein] + ATP = O-phospho-L-tyrosyl-[protein] + ADP + H(+). Leucettine L41 inhibits its kinase activity and affects the regulation of alternative splicing mediated by phosphorylation of SR proteins. Its function is as follows. Dual specificity kinase acting on both serine/threonine and tyrosine-containing substrates. Phosphorylates serine- and arginine-rich (SR) proteins of the spliceosomal complex. May be a constituent of a network of regulatory mechanisms that enable SR proteins to control RNA splicing and can cause redistribution of SR proteins from speckles to a diffuse nucleoplasmic distribution. Phosphorylates SRSF1 and SRSF3. Regulates the alternative splicing of tissue factor (F3) pre-mRNA in endothelial cells. This chain is Dual specificity protein kinase CLK3 (CLK3), found in Bos taurus (Bovine).